The primary structure comprises 101 residues: Small ribosomal subunit protein uS14 (101 aa).

The interval 1 to 26 is disordered; that stretch reads MAKVSSIKKNESRKKKSQSLHNKRSA. A compositionally biased stretch (basic residues) spans 11-26; it reads ESRKKKSQSLHNKRSA.

This sequence belongs to the universal ribosomal protein uS14 family. As to quaternary structure, part of the 30S ribosomal subunit. Contacts proteins S3 and S10.

Binds 16S rRNA, required for the assembly of 30S particles and may also be responsible for determining the conformation of the 16S rRNA at the A site. The chain is Small ribosomal subunit protein uS14 from Rickettsia felis (strain ATCC VR-1525 / URRWXCal2) (Rickettsia azadi).